We begin with the raw amino-acid sequence, 474 residues long: Trigger factor (474 aa).

The 86-residue stretch at 165 to 250 (GDRVTIDYLG…VKTVSKPDEL (86 aa)) folds into the PPIase FKBP-type domain. The segment covering 451 to 467 (VKKKTASDNKKSNEIKK) has biased composition (basic and acidic residues). Residues 451–474 (VKKKTASDNKKSNEIKKKSTMKKV) form a disordered region.

Belongs to the FKBP-type PPIase family. Tig subfamily.

It is found in the cytoplasm. It carries out the reaction [protein]-peptidylproline (omega=180) = [protein]-peptidylproline (omega=0). In terms of biological role, involved in protein export. Acts as a chaperone by maintaining the newly synthesized protein in an open conformation. Functions as a peptidyl-prolyl cis-trans isomerase. This chain is Trigger factor, found in Bartonella bacilliformis (strain ATCC 35685 / KC583 / Herrer 020/F12,63).